The chain runs to 110 residues: Bowman-Birk type proteinase inhibitor (110 aa).

The N-terminal stretch at 1–28 is a signal peptide; it reads MVLMNKKAIMKLALMLFLLGFTANVVDA. Residues 29–42 constitute a propeptide that is removed on maturation; that stretch reads RFDSTSFITQVLSN. Intrachain disulfides connect C50–C103, C51–C66, C54–C99, C56–C64, C73–C80, C77–C92, and C82–C90.

As to quaternary structure, monomer.

Its function is as follows. Inhibitor of trypsin and of chymotrypsin. The sequence is that of Bowman-Birk type proteinase inhibitor from Lens culinaris (Lentil).